A 354-amino-acid polypeptide reads, in one-letter code: Phosphate acyltransferase (354 aa).

It belongs to the PlsX family. As to quaternary structure, homodimer. Probably interacts with PlsY.

It is found in the cytoplasm. It carries out the reaction a fatty acyl-[ACP] + phosphate = an acyl phosphate + holo-[ACP]. The protein operates within lipid metabolism; phospholipid metabolism. Functionally, catalyzes the reversible formation of acyl-phosphate (acyl-PO(4)) from acyl-[acyl-carrier-protein] (acyl-ACP). This enzyme utilizes acyl-ACP as fatty acyl donor, but not acyl-CoA. The chain is Phosphate acyltransferase from Bordetella petrii (strain ATCC BAA-461 / DSM 12804 / CCUG 43448).